A 510-amino-acid chain; its full sequence is Inositol-3-phosphate synthase (510 aa).

Residues Gly-70, Gly-71, Asn-72, Asn-73, Asp-143, Ile-180, Gln-190, Arg-193, Thr-230, Ala-231, Asn-232, Thr-233, Gly-281, Ser-282, Asp-306, Ser-309, Asn-340, Asn-341, Asp-342, Lys-355, Gly-393, Asp-394, Asp-422, and Ser-423 each contribute to the NAD(+) site.

This sequence belongs to the myo-inositol 1-phosphate synthase family. The cofactor is NAD(+).

It localises to the cytoplasm. The protein localises to the cytosol. It is found in the nucleus. It carries out the reaction D-glucose 6-phosphate = 1D-myo-inositol 3-phosphate. The protein operates within polyol metabolism; myo-inositol biosynthesis; myo-inositol from D-glucose 6-phosphate: step 1/2. Key enzyme in myo-inositol biosynthesis pathway that catalyzes the conversion of glucose 6-phosphate to 1-myo-inositol 1-phosphate in a NAD-dependent manner. The sequence is that of Inositol-3-phosphate synthase from Sesamum indicum (Oriental sesame).